The following is a 138-amino-acid chain: Small ribosomal subunit protein uS11c (138 aa).

The segment at 1–23 (MAKPIPRIGSRKNGRIGSRKSGR) is disordered. A compositionally biased stretch (basic residues) spans 9-23 (GSRKNGRIGSRKSGR).

It belongs to the universal ribosomal protein uS11 family. As to quaternary structure, part of the 30S ribosomal subunit.

It is found in the plastid. Its subcellular location is the chloroplast. This chain is Small ribosomal subunit protein uS11c, found in Buxus microphylla (Littleleaf boxwood).